Consider the following 501-residue polypeptide: Acid-sensing ion channel 1A (501 aa).

Residues 1–54 (MKTSVMDLKVEPMDIDFDQPPPLQVFAHTSTLHGISHIFSYEKITAKCCLWVVF) lie on the Cytoplasmic side of the membrane. The helical transmembrane segment at 55-71 (FLSSLTFLMYVCIDRIQ) threads the bilayer. At 72–429 (FYLEYPHVTK…ETIEQRKAYE (358 aa)) the chain is on the extracellular side. Intrachain disulfides connect Cys-98/Cys-199, Cys-177/Cys-184, Cys-294/Cys-369, Cys-312/Cys-365, Cys-316/Cys-363, Cys-325/Cys-347, and Cys-327/Cys-339. A glycan (N-linked (GlcNAc...) asparagine) is linked at Asn-164. Asn-370 is a glycosylation site (N-linked (GlcNAc...) asparagine). The chain crosses the membrane as a discontinuously helical span at residues 430 to 460 (VAGLLGDIGGQMGLFIGASILTILELFDYLY). Residues 446 to 448 (GAS) carry the GAS motif; ion selectivity filter motif. The Cytoplasmic portion of the chain corresponds to 461–501 (EVMKYRLCRCSNKKHHNNNNNTDHNAVFSLDDVNCHVSKFH).

It belongs to the amiloride-sensitive sodium channel (TC 1.A.6) family. ASIC1 subfamily. As to quaternary structure, homotrimer. Heterotrimer; with other ASIC proteins producing channel with different properties. Interacts with asic1c. Expressed in central nervous system. Faintly expressed in the trunk, presumably in dorsal root ganglia.

It localises to the cell membrane. Its subcellular location is the postsynaptic cell membrane. The protein resides in the cell projection. The protein localises to the dendrite. The catalysed reaction is Na(+)(in) = Na(+)(out). It catalyses the reaction K(+)(in) = K(+)(out). The enzyme catalyses Li(+)(in) = Li(+)(out). It carries out the reaction Ca(2+)(in) = Ca(2+)(out). With respect to regulation, inhibited by the diuretic drug amiloride. Forms voltage-independent, pH-gated trimeric sodium channels that act as postsynaptic excitatory receptors in the nervous system, playing a crucial role in regulating synaptic plasticity, learning, and memory. Upon extracellular pH drop this channel elicits transient, fast activating, and completely desensitizing inward currents. Displays high selectivity for sodium ions but can also permit the permeation of other cations. In Danio rerio (Zebrafish), this protein is Acid-sensing ion channel 1A (asic1a).